The chain runs to 473 residues: Photosystem II CP43 reaction center protein (473 aa).

Positions 1–14 are excised as a propeptide; sequence MKILYSLRRFYHVE. The residue at position 15 (threonine 15) is an N-acetylthreonine. Threonine 15 carries the post-translational modification Phosphothreonine. The next 5 helical transmembrane spans lie at 69 to 93, 134 to 155, 178 to 200, 255 to 275, and 291 to 312; these read LFEVAHFVPEKPMYEQGLILLPHLA, LLGPETLEESFPFFGYVWKDRN, KALYFGGVYDTWAPGGGDVRKIT, KPFAWARRAFVWSGEAYLSYS, and WFNNTAYPSEFYGPTGPEASQA. Glutamate 367 contributes to the [CaMn4O5] cluster binding site. A helical transmembrane segment spans residues 447–471; it reads RARAAAAGFEKGIDRDLEPVLYMTP.

The protein belongs to the PsbB/PsbC family. PsbC subfamily. PSII is composed of 1 copy each of membrane proteins PsbA, PsbB, PsbC, PsbD, PsbE, PsbF, PsbH, PsbI, PsbJ, PsbK, PsbL, PsbM, PsbT, PsbX, PsbY, PsbZ, Psb30/Ycf12, at least 3 peripheral proteins of the oxygen-evolving complex and a large number of cofactors. It forms dimeric complexes. The cofactor is Binds multiple chlorophylls and provides some of the ligands for the Ca-4Mn-5O cluster of the oxygen-evolving complex. It may also provide a ligand for a Cl- that is required for oxygen evolution. PSII binds additional chlorophylls, carotenoids and specific lipids..

It localises to the plastid. The protein resides in the chloroplast thylakoid membrane. One of the components of the core complex of photosystem II (PSII). It binds chlorophyll and helps catalyze the primary light-induced photochemical processes of PSII. PSII is a light-driven water:plastoquinone oxidoreductase, using light energy to abstract electrons from H(2)O, generating O(2) and a proton gradient subsequently used for ATP formation. In Saccharum hybrid (Sugarcane), this protein is Photosystem II CP43 reaction center protein.